The following is a 557-amino-acid chain: Small ribosomal subunit protein bS1 (557 aa).

S1 motif domains follow at residues G21–E87, S105–R171, G192–K260, G277–K347, G364–K434, and G451–R520.

It belongs to the bacterial ribosomal protein bS1 family.

Functionally, binds mRNA; thus facilitating recognition of the initiation point. It is needed to translate mRNA with a short Shine-Dalgarno (SD) purine-rich sequence. This chain is Small ribosomal subunit protein bS1 (rpsA), found in Dickeya dadantii (strain 3937) (Erwinia chrysanthemi (strain 3937)).